The primary structure comprises 118 residues: UPF0148 protein M1627_1409 (118 aa).

This sequence belongs to the UPF0148 family.

This chain is UPF0148 protein M1627_1409, found in Saccharolobus islandicus (strain M.16.27) (Sulfolobus islandicus).